The primary structure comprises 99 residues: Cytochrome c-555 (99 aa).

Heme c is bound by residues Cys23, Cys26, His27, and Met73.

Binds 1 heme c group covalently per subunit.

The chain is Cytochrome c-555 from Prosthecochloris aestuarii.